A 49-amino-acid polypeptide reads, in one-letter code: Large ribosomal subunit protein bL36 (49 aa).

Belongs to the bacterial ribosomal protein bL36 family.

The protein is Large ribosomal subunit protein bL36 of Delftia acidovorans (strain DSM 14801 / SPH-1).